Reading from the N-terminus, the 541-residue chain is MSNKLATVGNNLDSRYTMAGGIRRQINKVFPTHWSFLLGEIALYSFIILILTGVYLTLFFDPSITKVIYDGAYLPLNGVEMSRAYMTALDISFEVRGGLFVRQMHHWAALMFVVSMMVHMMRIFFTGAFRRPREANWVIGVVLLILGIAEGFMGYSLPDDLLSGVGLRIMSAIIVGLPIIGTWMHWMIFGGDFPSDIMLDRFYIAHVLIIPGIILGLIAAHLALVWYQKHTQFPGAGRTENNVIGIRIMPVFAVKSVAFGAITLGFLSLLAGVTTINAIWNLGPYNPSQVSAGSQPDIYMLWTDGAARVMPAWELYFGNYTVPAVFWVAIMLGILVVLLIAYPWIEKKLTGDDAHHNLLQRPRDVPVRTSLGVMALIFYILLTISGGNDIWAYQFDVSLNAMTWIGRIGLIVFPAIGYFVTYRLCIGLQRSDREVLEHGIETGVIKQMPNGAFIEVHQPLGPVDEHGHPIPLPYSGAKVPKQLNELGFAEVESRGGFFGPDPESVATKANEIAHANHLEEVATLAAIQEENRKRDQAEGRI.

Residues 36 to 56 (FLLGEIALYSFIILILTGVYL) form a helical membrane-spanning segment. The heme site is built by histidine 105 and histidine 119. The next 3 membrane-spanning stretches (helical) occupy residues 109–129 (ALMF…TGAF), 137–157 (WVIG…GYSL), and 169–189 (IMSA…WMIF). Residues histidine 206 and histidine 221 each contribute to the heme site. The next 5 membrane-spanning stretches (helical) occupy residues 207-227 (VLII…LVWY), 256-276 (SVAF…VTTI), 325-345 (VFWV…YPWI), 371-391 (LGVM…NDIW), and 408-428 (IGLI…CIGL).

Belongs to the cytochrome b family. In terms of assembly, the cytochrome bc1 complex is composed of a cytochrome b (QcrB), the Rieske protein iron-sulfur (QcrA) and a diheme cytochrome c (QcrC) subunit. Heme is required as a cofactor.

The protein resides in the cell membrane. The catalysed reaction is a quinol + 2 Fe(III)-[cytochrome c](out) = a quinone + 2 Fe(II)-[cytochrome c](out) + 2 H(+)(out). In terms of biological role, cytochrome b subunit of the cytochrome bc1 complex, an essential component of the respiratory electron transport chain required for ATP synthesis. The bc1 complex catalyzes the oxidation of menaquinol and the reduction of cytochrome c in the respiratory chain. The bc1 complex operates through a Q-cycle mechanism that couples electron transfer to generation of the proton gradient that drives ATP synthesis. This Corynebacterium efficiens (strain DSM 44549 / YS-314 / AJ 12310 / JCM 11189 / NBRC 100395) protein is Cytochrome bc1 complex cytochrome b subunit (qcrB).